The primary structure comprises 386 residues: Myosin light chain kinase family member 4 (386 aa).

Ser-100 carries the post-translational modification Phosphoserine. Positions Val-107–Leu-361 constitute a Protein kinase domain. ATP contacts are provided by residues Leu-113–Val-121 and Lys-136. The active-site Proton acceptor is Asp-227.

Belongs to the protein kinase superfamily. CAMK Ser/Thr protein kinase family.

It carries out the reaction L-seryl-[protein] + ATP = O-phospho-L-seryl-[protein] + ADP + H(+). The enzyme catalyses L-threonyl-[protein] + ATP = O-phospho-L-threonyl-[protein] + ADP + H(+). This chain is Myosin light chain kinase family member 4 (Mylk4), found in Mus musculus (Mouse).